The following is a 182-amino-acid chain: Large ribosomal subunit protein uL5 (182 aa).

Belongs to the universal ribosomal protein uL5 family. As to quaternary structure, part of the 50S ribosomal subunit; part of the 5S rRNA/L5/L18/L25 subcomplex. Contacts the 5S rRNA and the P site tRNA. Forms a bridge to the 30S subunit in the 70S ribosome.

In terms of biological role, this is one of the proteins that bind and probably mediate the attachment of the 5S RNA into the large ribosomal subunit, where it forms part of the central protuberance. In the 70S ribosome it contacts protein S13 of the 30S subunit (bridge B1b), connecting the 2 subunits; this bridge is implicated in subunit movement. Contacts the P site tRNA; the 5S rRNA and some of its associated proteins might help stabilize positioning of ribosome-bound tRNAs. The sequence is that of Large ribosomal subunit protein uL5 from Mycoplasma mobile (strain ATCC 43663 / 163K / NCTC 11711) (Mesomycoplasma mobile).